The following is a 30-amino-acid chain: Cyclotide hyen-E (30 aa).

The cyclopeptide (Gly-Asn) cross-link spans 1 to 30; that stretch reads GVPCGESCVYIPCFTGIINCSCRDKVCYNN. 3 disulfide bridges follow: C4–C20, C8–C22, and C13–C27.

In terms of processing, this is a cyclic peptide. Detected in stems (at protein level).

Its function is as follows. Probably participates in a plant defense mechanism. Has cytotoxic activity against HUVEC cells (LC(50)= 2.17 uM) and various cancer cells including HeLa (LC(50)= 3.05 uM), MCF-7 and K562. Displays very weak hemolytic activity. Binds to and induces leakage in phospholipd membranes, particularly ones containing 1-palmitoyl-2-oleophosphatidylethanolamine (POPE). This Pigea enneasperma (Spade flower) protein is Cyclotide hyen-E.